Here is a 112-residue protein sequence, read N- to C-terminus: Tetracenomycin-F1 monooxygenase (112 aa).

Residues 11–100 (FTLVNVFGVA…SRPKPIFCEV (90 aa)) enclose the ABM domain.

As to quaternary structure, homotrimer.

It catalyses the reaction tetracenomycin F1 + O2 = tetracenomycin D3 + H2O + H(+). The protein operates within antibiotic biosynthesis; tetracenomycin C biosynthesis. Its activity is regulated as follows. Inhibited by p-chloromercuribenzoic acid, N-ethylmaleimide and diethyl pyrocarbonate. Its function is as follows. Oxygenase required for conversion of tetracenomycin F1 to tetracenomycin D3. The polypeptide is Tetracenomycin-F1 monooxygenase (tcmH) (Streptomyces glaucescens).